Consider the following 206-residue polypeptide: Guanylate kinase (206 aa).

The Guanylate kinase-like domain occupies Gly6–Arg184. Ala13–Ser20 serves as a coordination point for ATP.

Belongs to the guanylate kinase family.

It localises to the cytoplasm. It catalyses the reaction GMP + ATP = GDP + ADP. In terms of biological role, essential for recycling GMP and indirectly, cGMP. This Pseudomonas fluorescens (strain Pf0-1) protein is Guanylate kinase.